The sequence spans 502 residues: Hexokinase-2 (502 aa).

The chain crosses the membrane as a helical span at residues Val4–Val24. A Hexokinase domain is found at Ala35–Ala487. A hexokinase small subdomain region spans residues Ser90–Val228. Gly104, Thr105, and Asn106 together coordinate ADP. D-glucose is bound by residues Thr194, Lys195, Asn229, and Asp230. A hexokinase large subdomain region spans residues Asn229–Asp476. Thr253 provides a ligand contact to ADP. D-glucose-binding residues include Asn256, Glu284, and Glu315. Position 441 (Gly441) interacts with ADP.

It belongs to the hexokinase family. In terms of tissue distribution, highly expressed in siliques, at intermediate levels in roots and flowers, and at lower levels in stems, rosette and cauline leaves.

The protein resides in the mitochondrion outer membrane. It carries out the reaction a D-hexose + ATP = a D-hexose 6-phosphate + ADP + H(+). It catalyses the reaction D-fructose + ATP = D-fructose 6-phosphate + ADP + H(+). The catalysed reaction is D-glucose + ATP = D-glucose 6-phosphate + ADP + H(+). Its pathway is carbohydrate metabolism; hexose metabolism. The protein operates within carbohydrate degradation; glycolysis; D-glyceraldehyde 3-phosphate and glycerone phosphate from D-glucose: step 1/4. In terms of biological role, fructose and glucose phosphorylating enzyme. May be involved in the phosphorylation of glucose during the export from mitochondrion to cytosol. Acts as a sugar sensor which may regulate sugar-dependent gene repression or activation. Mediates the effects of sugar on plant growth and development independently of its catalytic activity or the sugar metabolism. May regulate the execution of program cell death in plant cells. The polypeptide is Hexokinase-2 (HXK2) (Arabidopsis thaliana (Mouse-ear cress)).